Reading from the N-terminus, the 438-residue chain is ATP synthase subunit alpha, chloroplastic (438 aa).

170-177 lines the ATP pocket; sequence GDRQTGKT.

It belongs to the ATPase alpha/beta chains family. F-type ATPases have 2 components, CF(1) - the catalytic core - and CF(0) - the membrane proton channel. CF(1) has five subunits: alpha(3), beta(3), gamma(1), delta(1), epsilon(1). CF(0) has four main subunits: a, b, b' and c.

Its subcellular location is the plastid. The protein localises to the chloroplast thylakoid membrane. The enzyme catalyses ATP + H2O + 4 H(+)(in) = ADP + phosphate + 5 H(+)(out). In terms of biological role, produces ATP from ADP in the presence of a proton gradient across the membrane. The alpha chain is a regulatory subunit. This Ochrosphaera neapolitana protein is ATP synthase subunit alpha, chloroplastic.